A 223-amino-acid chain; its full sequence is Small ribosomal subunit protein uS3 (223 aa).

The KH type-2 domain occupies 38–106 (LKRELKEKLK…EVFIDILEVN (69 aa)).

It belongs to the universal ribosomal protein uS3 family. As to quaternary structure, part of the 30S ribosomal subunit. Forms a tight complex with proteins S10 and S14.

In terms of biological role, binds the lower part of the 30S subunit head. Binds mRNA in the 70S ribosome, positioning it for translation. This is Small ribosomal subunit protein uS3 from Acidobacterium capsulatum (strain ATCC 51196 / DSM 11244 / BCRC 80197 / JCM 7670 / NBRC 15755 / NCIMB 13165 / 161).